Here is a 777-residue protein sequence, read N- to C-terminus: Disintegrin and metalloproteinase domain-containing protein 5 (777 aa).

Residues 1-16 (MFLVLVLLTGLGRLYA) form the signal peptide. A propeptide spanning residues 17–142 (GNNPRKTFVQ…VLSGFTHMIY (126 aa)) is cleaved from the precursor. The Extracellular portion of the chain corresponds to 17 to 706 (GNNPRKTFVQ…RGYVVLSTKR (690 aa)). N-linked (GlcNAc...) asparagine glycosylation is found at asparagine 49 and asparagine 123. The Peptidase M12B domain occupies 185-382 (RYIDMYIVVN…YGLTCLRNTS (198 aa)). 4 disulfides stabilise this stretch: cysteine 294/cysteine 377, cysteine 336/cysteine 361, cysteine 338/cysteine 343, and cysteine 456/cysteine 477. Residues 396-485 (RRICGNSIRE…DCVHDTYAQN (90 aa)) form the Disintegrin domain. N-linked (GlcNAc...) asparagine glycosylation occurs at asparagine 566. One can recognise an EGF-like domain in the interval 633-667 (NNGSCNAEIHCQGRGICNNLDNCHCHKGFVPPECA). 3 cysteine pairs are disulfide-bonded: cysteine 637–cysteine 649, cysteine 643–cysteine 655, and cysteine 657–cysteine 666. The chain crosses the membrane as a helical span at residues 707–727 (FQLIFYIGIPVIIIVAAILIK). Topologically, residues 728–777 (QNQLGKLFCRGEKEHMSSVSEDGSRSVTLSATESKFPADTEHSNKEEDAQ) are cytoplasmic. A compositionally biased stretch (polar residues) spans 744 to 760 (SSVSEDGSRSVTLSATE). Positions 744–777 (SSVSEDGSRSVTLSATESKFPADTEHSNKEEDAQ) are disordered. Positions 763–777 (FPADTEHSNKEEDAQ) are enriched in basic and acidic residues.

Interacts with TEX101. Subject to proteolytic processing during epididymal transit of spermatozoa. In terms of tissue distribution, detected in testis.

The protein localises to the membrane. This is a non catalytic metalloprotease-like protein. May play a role in sperm-egg fusion. This is Disintegrin and metalloproteinase domain-containing protein 5 (ADAM5) from Cavia porcellus (Guinea pig).